A 142-amino-acid polypeptide reads, in one-letter code: Cytochrome c-type biogenesis protein CcmE (142 aa).

Topologically, residues 1 to 2 (MK) are cytoplasmic. Residues 3 to 23 (GKYLLGILVILGALGYMVFGG) traverse the membrane as a helical; Signal-anchor for type II membrane protein segment. At 24–142 (LGRNLVYFLT…EVRKLIEEAQ (119 aa)) the chain is on the periplasmic side. Heme is bound by residues histidine 118 and tyrosine 122.

It belongs to the CcmE/CycJ family.

It is found in the cell inner membrane. Its function is as follows. Heme chaperone required for the biogenesis of c-type cytochromes. Transiently binds heme delivered by CcmC and transfers the heme to apo-cytochromes in a process facilitated by CcmF and CcmH. The sequence is that of Cytochrome c-type biogenesis protein CcmE from Thermus thermophilus (strain ATCC 27634 / DSM 579 / HB8).